Consider the following 180-residue polypeptide: FMN reductase (NADH) RutF (180 aa).

The protein belongs to the non-flavoprotein flavin reductase family. RutF subfamily.

The catalysed reaction is FMNH2 + NAD(+) = FMN + NADH + 2 H(+). Functionally, catalyzes the reduction of FMN to FMNH2 which is used to reduce pyrimidine by RutA via the Rut pathway. The polypeptide is FMN reductase (NADH) RutF (Variovorax paradoxus (strain S110)).